The following is a 224-amino-acid chain: Germin-like protein 8-5 (224 aa).

The signal sequence occupies residues Met1–Ala22. The cysteines at positions 32 and 47 are disulfide-linked. The Cupin type-1 domain occupies Ala62–Asp212. The N-linked (GlcNAc...) asparagine glycan is linked to Asn76. Mn(2+) contacts are provided by His109, His111, and Glu116. Asn135 carries N-linked (GlcNAc...) asparagine glycosylation. His157 is a binding site for Mn(2+).

Belongs to the germin family. As to quaternary structure, oligomer (believed to be a pentamer but probably hexamer).

It is found in the secreted. Its subcellular location is the extracellular space. The protein localises to the apoplast. In terms of biological role, plays a role in broad-spectrum disease resistance. Probably has no oxalate oxidase activity even if the active site is conserved. The sequence is that of Germin-like protein 8-5 from Oryza sativa subsp. japonica (Rice).